The sequence spans 431 residues: Glucose-1-phosphate adenylyltransferase (431 aa).

Residue Lys-39 coordinates beta-D-fructose 1,6-bisphosphate. Residues Arg-40, His-46, and Arg-52 each contribute to the AMP site. Alpha-D-glucose 1-phosphate-binding positions include Tyr-114, Gly-179, 194 to 195 (EK), and Ser-212. 2 residues coordinate AMP: Glu-370 and Arg-386. Residues 419-423 (REMLR) and 429-431 (QER) each bind beta-D-fructose 1,6-bisphosphate.

This sequence belongs to the bacterial/plant glucose-1-phosphate adenylyltransferase family. In terms of assembly, homotetramer.

The enzyme catalyses alpha-D-glucose 1-phosphate + ATP + H(+) = ADP-alpha-D-glucose + diphosphate. It functions in the pathway glycan biosynthesis; glycogen biosynthesis. Allosterically activated by fructose-1,6-bisphosphate (F16BP) and inhibited by AMP. Its function is as follows. Involved in the biosynthesis of ADP-glucose, a building block required for the elongation reactions to produce glycogen. Catalyzes the reaction between ATP and alpha-D-glucose 1-phosphate (G1P) to produce pyrophosphate and ADP-Glc. This is Glucose-1-phosphate adenylyltransferase from Salmonella typhi.